We begin with the raw amino-acid sequence, 396 residues long: Pectate lyase 5 (396 aa).

Positions 1–25 are cleaved as a signal peptide; the sequence is MGIKHCCYILYFTLALVTLLQPVRS. A glycan (N-linked (GlcNAc...) asparagine) is linked at Asn-36. Cys-53 and Cys-70 form a disulfide bridge. Residues Asp-193, Asp-217, and Asp-221 each contribute to the Ca(2+) site. Arg-273 is a catalytic residue.

The protein belongs to the polysaccharide lyase 1 family. Amb a subfamily. Monomer. The cofactor is Ca(2+). In terms of processing, the N-terminus is blocked. As to expression, pollen and flowers.

The enzyme catalyses Eliminative cleavage of (1-&gt;4)-alpha-D-galacturonan to give oligosaccharides with 4-deoxy-alpha-D-galact-4-enuronosyl groups at their non-reducing ends.. It participates in glycan metabolism; pectin degradation; 2-dehydro-3-deoxy-D-gluconate from pectin: step 2/5. Its function is as follows. Has pectate lyase activity. This is Pectate lyase 5 from Ambrosia artemisiifolia (Common ragweed).